The following is a 131-amino-acid chain: Large ribosomal subunit protein bL17 (131 aa).

Belongs to the bacterial ribosomal protein bL17 family. Part of the 50S ribosomal subunit. Contacts protein L32.

This chain is Large ribosomal subunit protein bL17, found in Burkholderia multivorans (strain ATCC 17616 / 249).